The following is a 470-amino-acid chain: 3-isopropylmalate dehydratase large subunit (470 aa).

[4Fe-4S] cluster contacts are provided by C349, C410, and C413.

The protein belongs to the aconitase/IPM isomerase family. LeuC type 1 subfamily. In terms of assembly, heterodimer of LeuC and LeuD. It depends on [4Fe-4S] cluster as a cofactor.

It carries out the reaction (2R,3S)-3-isopropylmalate = (2S)-2-isopropylmalate. It functions in the pathway amino-acid biosynthesis; L-leucine biosynthesis; L-leucine from 3-methyl-2-oxobutanoate: step 2/4. Catalyzes the isomerization between 2-isopropylmalate and 3-isopropylmalate, via the formation of 2-isopropylmaleate. This Nitrosomonas europaea (strain ATCC 19718 / CIP 103999 / KCTC 2705 / NBRC 14298) protein is 3-isopropylmalate dehydratase large subunit.